We begin with the raw amino-acid sequence, 176 residues long: Large ribosomal subunit protein uL22 (176 aa).

The interval 113–176 (VVESRPSKDQ…ETSEAKGGSD (64 aa)) is disordered. Positions 136–152 (SKAAATAPAKKSSASKA) are enriched in low complexity. The segment covering 159–176 (TKAESKTSETSEAKGGSD) has biased composition (basic and acidic residues).

This sequence belongs to the universal ribosomal protein uL22 family. As to quaternary structure, part of the 50S ribosomal subunit.

This protein binds specifically to 23S rRNA; its binding is stimulated by other ribosomal proteins, e.g. L4, L17, and L20. It is important during the early stages of 50S assembly. It makes multiple contacts with different domains of the 23S rRNA in the assembled 50S subunit and ribosome. Its function is as follows. The globular domain of the protein is located near the polypeptide exit tunnel on the outside of the subunit, while an extended beta-hairpin is found that lines the wall of the exit tunnel in the center of the 70S ribosome. In Mycobacterium marinum (strain ATCC BAA-535 / M), this protein is Large ribosomal subunit protein uL22.